The following is a 291-amino-acid chain: 4-hydroxy-tetrahydrodipicolinate synthase (291 aa).

A pyruvate-binding site is contributed by Thr45. The active-site Proton donor/acceptor is Tyr131. Lys159 functions as the Schiff-base intermediate with substrate in the catalytic mechanism. Ile202 contributes to the pyruvate binding site.

This sequence belongs to the DapA family. Homotetramer; dimer of dimers.

Its subcellular location is the cytoplasm. The enzyme catalyses L-aspartate 4-semialdehyde + pyruvate = (2S,4S)-4-hydroxy-2,3,4,5-tetrahydrodipicolinate + H2O + H(+). It functions in the pathway amino-acid biosynthesis; L-lysine biosynthesis via DAP pathway; (S)-tetrahydrodipicolinate from L-aspartate: step 3/4. Catalyzes the condensation of (S)-aspartate-beta-semialdehyde [(S)-ASA] and pyruvate to 4-hydroxy-tetrahydrodipicolinate (HTPA). This is 4-hydroxy-tetrahydrodipicolinate synthase from Methanosarcina mazei (strain ATCC BAA-159 / DSM 3647 / Goe1 / Go1 / JCM 11833 / OCM 88) (Methanosarcina frisia).